Here is a 1382-residue protein sequence, read N- to C-terminus: ABC-type transporter atr1 (1382 aa).

The span at 1–12 (MRFRSDSRADHQ) shows a compositional bias: basic and acidic residues. Residues 1-56 (MRFRSDSRADHQHPKKQGSMDPDTIQALKYQDRSSSSSSNNKPKEKVGSASTSPSP) are disordered. An N-linked (GlcNAc...) asparagine glycan is attached at asparagine 62. 6 helical membrane-spanning segments follow: residues 101–121 (LFGT…NIFI), 159–179 (LILL…MAVF), 233–253 (LPMA…AFAF), 259–279 (LVLL…GALT), 339–359 (GVGV…AFFY), and 374–394 (IVSV…LFSM). Residues 101–400 (LFGTGMAIAA…LFSMIENFTM (300 aa)) form the ABC transmembrane type-1 1 domain. N-linked (GlcNAc...) asparagine glycosylation is present at asparagine 397. The region spanning 445–688 (LKLDHVHFAY…PNGTFASMLR (244 aa)) is the ABC transporter 1 domain. 480–487 (GLSGSGKS) is a binding site for ATP. Asparagine 680 carries an N-linked (GlcNAc...) asparagine glycan. Positions 738–768 (SVKPKDPSKNFEPPGESYASPAADGVKQDAP) are disordered. An ABC transmembrane type-1 2 domain is found at 797–1094 (LGSLCAAIIG…IFNYSADFSS (298 aa)). Residues 800-820 (LCAAIIGAVYPVYAILFGTAI) form a helical membrane-spanning segment. The N-linked (GlcNAc...) asparagine glycan is linked to asparagine 827. A helical transmembrane segment spans residues 848–868 (ISSGSFFIVAVGCAFISFYHV). Residue asparagine 903 is glycosylated (N-linked (GlcNAc...) asparagine). The next 2 membrane-spanning stretches (helical) occupy residues 911–931 (SLSV…GSIV) and 951–973 (LALV…LRVL). N-linked (GlcNAc...) asparagine glycosylation occurs at asparagine 1020. The next 2 membrane-spanning stretches (helical) occupy residues 1034 to 1054 (VLFG…FWYG) and 1067 to 1087 (GFFT…NIFN). The region spanning 1136–1377 (IALKEVTFRY…DGLFALMARL (242 aa)) is the ABC transporter 2 domain. Residue 1171-1178 (GGSGSGKS) participates in ATP binding. An N-linked (GlcNAc...) asparagine glycan is attached at asparagine 1324.

The protein belongs to the ABC transporter superfamily. ABCB family. Multidrug resistance exporter (TC 3.A.1.201) subfamily.

It localises to the cell membrane. In terms of biological role, ABC-type transporter; part of the gene cluster that mediates the biosynthesis of the glycolipid biosurfactant ustilagic acid (UA). UA is a secreted cellobiose glycolipid that is toxic for many microorganisms and confers biocontrol activity to U.maydis. Export of UA is presumably catalyzed by the ABC transporter atr1. Atr1 appears to be quite unspecific, as many of the UA derivatives produced by cluster mutant strains are readily exported. This chain is ABC-type transporter atr1, found in Mycosarcoma maydis (Corn smut fungus).